A 283-amino-acid polypeptide reads, in one-letter code: MKFAIFVNTTREKALELARELTAWLDARSIDYVFDPQSAKALGCGKWEEKADLSQHCDAFVALGGDGTLLLASHYSRSKPVVGINVGDLGFLTEFSPDEMWVAMDHLVSGNYSIHTRSQLEATLESGESLTSLNDVIFEKGSAARRLPAFTILLDDEMLGSYRADGIIIATSTGSTAYSMSAGGPIIAPKSNVFVITPICPHMLTVRPIVISDDKTIKISVDSQSGEFPLKMDGIQKKLLAPGEVVTVKKSPHHINLVANEKRNYCEILRKKLLWSHEHPTGE.

Catalysis depends on Asp-66, which acts as the Proton acceptor. NAD(+) contacts are provided by residues 66–67 (DG), 134–135 (ND), Arg-145, Arg-163, Asp-165, and 176–181 (TAYSMS).

This sequence belongs to the NAD kinase family. Requires a divalent metal cation as cofactor.

It localises to the cytoplasm. The catalysed reaction is NAD(+) + ATP = ADP + NADP(+) + H(+). Functionally, involved in the regulation of the intracellular balance of NAD and NADP, and is a key enzyme in the biosynthesis of NADP. Catalyzes specifically the phosphorylation on 2'-hydroxyl of the adenosine moiety of NAD to yield NADP. This is NAD kinase from Chlorobaculum tepidum (strain ATCC 49652 / DSM 12025 / NBRC 103806 / TLS) (Chlorobium tepidum).